Reading from the N-terminus, the 176-residue chain is T cell receptor beta constant 1 (176 aa).

The 110-residue stretch at 8 to 117 (PEVAVFEPSE…WTQDRAKPVT (110 aa)) folds into the Ig-like C1-type domain. Cysteine 30 and cysteine 95 are oxidised to a cystine. N-linked (GlcNAc...) asparagine glycosylation is present at asparagine 69. Residues 130–144 (CGFTSVSYQQGVLSA) form a connecting peptide region. Residues 150–170 (ILLGKATLYAVLVSALVLMAM) traverse the membrane as a helical segment. The Cytoplasmic portion of the chain corresponds to 171–176 (VKRKDF).

Alpha-beta TR is a heterodimer composed of an alpha and beta chain; disulfide-linked. The alpha-beta TR is associated with the transmembrane signaling CD3 coreceptor proteins to form the TR-CD3 (TcR or TCR). The assembly of alpha-beta TR heterodimers with CD3 occurs in the endoplasmic reticulum where a single alpha-beta TR heterodimer associates with one CD3D-CD3E heterodimer, one CD3G-CD3E heterodimer and one CD247 homodimer forming a stable octameric structure. CD3D-CD3E and CD3G-CD3E heterodimers preferentially associate with TR alpha and TR beta chains, respectively. The association of the CD247 homodimer is the last step of TcR assembly in the endoplasmic reticulum and is required for transport to the cell surface.

It is found in the cell membrane. In terms of biological role, constant region of T cell receptor (TR) beta chain. Alpha-beta T cell receptors are antigen specific receptors which are essential to the immune response and are present on the cell surface of T lymphocytes. Recognize peptide-major histocompatibility (MH) (pMH) complexes that are displayed by antigen presenting cells (APC), a prerequisite for efficient T cell adaptive immunity against pathogens. Binding of alpha-beta TR to pMH complex initiates TR-CD3 clustering on the cell surface and intracellular activation of LCK that phosphorylates the ITAM motifs of CD3G, CD3D, CD3E and CD247 enabling the recruitment of ZAP70. In turn, ZAP70 phosphorylates LAT, which recruits numerous signaling molecules to form the LAT signalosome. The LAT signalosome propagates signal branching to three major signaling pathways, the calcium, the mitogen-activated protein kinase (MAPK) kinase and the nuclear factor NF-kappa-B (NF-kB) pathways, leading to the mobilization of transcription factors that are critical for gene expression and essential for T cell growth and differentiation. The T cell repertoire is generated in the thymus, by V-(D)-J rearrangement. This repertoire is then shaped by intrathymic selection events to generate a peripheral T cell pool of self-MH restricted, non-autoaggressive T cells. Post-thymic interaction of alpha-beta TR with the pMH complexes shapes TR structural and functional avidity. In Homo sapiens (Human), this protein is T cell receptor beta constant 1.